A 264-amino-acid chain; its full sequence is Triosephosphate isomerase (264 aa).

12 to 14 is a substrate binding site; it reads NWK. The active-site Electrophile is histidine 104. The active-site Proton acceptor is glutamate 176. Residues glycine 182, serine 222, and 243 to 244 contribute to the substrate site; that span reads GG.

Belongs to the triosephosphate isomerase family. In terms of assembly, homodimer.

It localises to the cytoplasm. It catalyses the reaction D-glyceraldehyde 3-phosphate = dihydroxyacetone phosphate. It participates in carbohydrate biosynthesis; gluconeogenesis. The protein operates within carbohydrate degradation; glycolysis; D-glyceraldehyde 3-phosphate from glycerone phosphate: step 1/1. Involved in the gluconeogenesis. Catalyzes stereospecifically the conversion of dihydroxyacetone phosphate (DHAP) to D-glyceraldehyde-3-phosphate (G3P). In Bifidobacterium adolescentis (strain ATCC 15703 / DSM 20083 / NCTC 11814 / E194a), this protein is Triosephosphate isomerase.